The chain runs to 122 residues: Large ribosomal subunit protein uL14c (122 aa).

This sequence belongs to the universal ribosomal protein uL14 family. In terms of assembly, part of the 50S ribosomal subunit.

It is found in the plastid. Its subcellular location is the chloroplast. Binds to 23S rRNA. In Chlamydomonas reinhardtii (Chlamydomonas smithii), this protein is Large ribosomal subunit protein uL14c.